A 67-amino-acid chain; its full sequence is Large ribosomal subunit protein uL30 (67 aa).

This sequence belongs to the universal ribosomal protein uL30 family. In terms of assembly, part of the 50S ribosomal subunit.

This is Large ribosomal subunit protein uL30 from Hamiltonella defensa subsp. Acyrthosiphon pisum (strain 5AT).